The chain runs to 192 residues: Orotate phosphoribosyltransferase (192 aa).

116-124 (EDIVTTGLS) is a 5-phospho-alpha-D-ribose 1-diphosphate binding site. Thr-120 and Arg-148 together coordinate orotate.

It belongs to the purine/pyrimidine phosphoribosyltransferase family. PyrE subfamily. Homodimer. Mg(2+) serves as cofactor.

It catalyses the reaction orotidine 5'-phosphate + diphosphate = orotate + 5-phospho-alpha-D-ribose 1-diphosphate. The protein operates within pyrimidine metabolism; UMP biosynthesis via de novo pathway; UMP from orotate: step 1/2. Catalyzes the transfer of a ribosyl phosphate group from 5-phosphoribose 1-diphosphate to orotate, leading to the formation of orotidine monophosphate (OMP). This Bartonella tribocorum (strain CIP 105476 / IBS 506) protein is Orotate phosphoribosyltransferase.